The following is a 361-amino-acid chain: UDP-3-O-acylglucosamine N-acyltransferase (361 aa).

The active-site Proton acceptor is the His-264.

It belongs to the transferase hexapeptide repeat family. LpxD subfamily. As to quaternary structure, homotrimer.

It carries out the reaction a UDP-3-O-[(3R)-3-hydroxyacyl]-alpha-D-glucosamine + a (3R)-hydroxyacyl-[ACP] = a UDP-2-N,3-O-bis[(3R)-3-hydroxyacyl]-alpha-D-glucosamine + holo-[ACP] + H(+). Its pathway is bacterial outer membrane biogenesis; LPS lipid A biosynthesis. In terms of biological role, catalyzes the N-acylation of UDP-3-O-acylglucosamine using 3-hydroxyacyl-ACP as the acyl donor. Is involved in the biosynthesis of lipid A, a phosphorylated glycolipid that anchors the lipopolysaccharide to the outer membrane of the cell. The sequence is that of UDP-3-O-acylglucosamine N-acyltransferase from Bordetella avium (strain 197N).